Here is a 234-residue protein sequence, read N- to C-terminus: uncharacterized protein (234 aa).

4 LRR repeats span residues 44–63 (LEFL…LPKL), 64–84 (KLRK…EKCP), 85–107 (NLTH…PLKQ), and 111–134 (LKSL…VFKL). Residues 161–234 (EGLDDEEEGE…GEEERGQKRK (74 aa)) form a disordered region. A compositionally biased stretch (acidic residues) spans 163-226 (LDDEEEGEHE…GEEDEEELGE (64 aa)).

The protein belongs to the ANP32 family. In terms of tissue distribution, expressed in activated stem cells, such as mobilized CD34+ cells and cord blood CD34+ cells, but not in resting bone marrow CD34+ cells. Expressed in a variety of neoplastic cell lines, mainly in prostatic adenocarcinoma cell lines. Not expressed in normal prostatic tissue.

This is an uncharacterized protein from Homo sapiens (Human).